The following is a 65-amino-acid chain: Large ribosomal subunit protein bL31 (65 aa).

4 residues coordinate Zn(2+): C16, C18, C36, and C39.

This sequence belongs to the bacterial ribosomal protein bL31 family. Type A subfamily. In terms of assembly, part of the 50S ribosomal subunit. Zn(2+) serves as cofactor.

Functionally, binds the 23S rRNA. This Desulfitobacterium hafniense (strain DSM 10664 / DCB-2) protein is Large ribosomal subunit protein bL31.